The primary structure comprises 510 residues: Hyaluronidase PH-20 (510 aa).

The N-terminal stretch at 1-35 (MGVLKFKHIFFRSFVKSSGVSQIVFTFLLIPCCLT) is a signal peptide. 2 disulfide bridges follow: C60–C351 and C224–C238. The N-linked (GlcNAc...) asparagine glycan is linked to N82. The Proton donor role is filled by E148. 4 N-linked (GlcNAc...) asparagine glycosylation sites follow: N166, N235, N254, and N368. Intrachain disulfides connect C376–C387, C381–C435, and C437–C464. N393, N440, and N484 each carry an N-linked (GlcNAc...) asparagine glycan. Residue S491 is the site of GPI-anchor amidated serine attachment. The propeptide at 492–510 (TTMFIVNILFLIISSVASL) is removed in mature form.

The protein belongs to the glycosyl hydrolase 56 family. Testis.

It is found in the cell membrane. It carries out the reaction Random hydrolysis of (1-&gt;4)-linkages between N-acetyl-beta-D-glucosamine and D-glucuronate residues in hyaluronate.. Functionally, involved in sperm-egg adhesion. Upon fertilization sperm must first penetrate a layer of cumulus cells that surrounds the egg before reaching the zona pellucida. The cumulus cells are embedded in a matrix containing hyaluronic acid which is formed prior to ovulation. This protein aids in penetrating the layer of cumulus cells by digesting hyaluronic acid. In Macaca fascicularis (Crab-eating macaque), this protein is Hyaluronidase PH-20 (SPAM1).